The following is a 150-amino-acid chain: 6,7-dimethyl-8-ribityllumazine synthase (150 aa).

5-amino-6-(D-ribitylamino)uracil-binding positions include phenylalanine 11, valine 43–aspartate 45, and alanine 67–isoleucine 69. Alanine 72 to threonine 73 contacts (2S)-2-hydroxy-3-oxobutyl phosphate. Histidine 75 serves as the catalytic Proton donor. 5-amino-6-(D-ribitylamino)uracil is bound at residue leucine 100. Arginine 115 is a (2S)-2-hydroxy-3-oxobutyl phosphate binding site.

The protein belongs to the DMRL synthase family.

The catalysed reaction is (2S)-2-hydroxy-3-oxobutyl phosphate + 5-amino-6-(D-ribitylamino)uracil = 6,7-dimethyl-8-(1-D-ribityl)lumazine + phosphate + 2 H2O + H(+). Its pathway is cofactor biosynthesis; riboflavin biosynthesis; riboflavin from 2-hydroxy-3-oxobutyl phosphate and 5-amino-6-(D-ribitylamino)uracil: step 1/2. Its function is as follows. Catalyzes the formation of 6,7-dimethyl-8-ribityllumazine by condensation of 5-amino-6-(D-ribitylamino)uracil with 3,4-dihydroxy-2-butanone 4-phosphate. This is the penultimate step in the biosynthesis of riboflavin. This Pyrobaculum neutrophilum (strain DSM 2338 / JCM 9278 / NBRC 100436 / V24Sta) (Thermoproteus neutrophilus) protein is 6,7-dimethyl-8-ribityllumazine synthase.